We begin with the raw amino-acid sequence, 84 residues long: ICP35 (84 aa).

This is ICP35 from Crustacea (WSSV).